The sequence spans 149 residues: Protein E6 (149 aa).

Zinc fingers lie at residues 30 to 66 (CVECKKTLQRSEVYDFVFADLRIVYRDGNPFAVCKVC) and 103 to 139 (CIICQRPLCPQEKKRHVDLNKRFHNISGRWTGRCAVC). Positions 147–149 (TQV) match the PDZ-binding domain motif.

This sequence belongs to the papillomaviridae E6 protein family. Forms homodimers. Interacts with ubiquitin-protein ligase UBE3A/E6-AP and thus forms a complex with human TP53. Interacts with human NFX1 and MAGI3. Interacts with human IRF3; this interaction inhibits the establishment of antiviral state. Interacts with human TYK2; this interaction inhibits JAK-STAT activation by interferon alpha. Interacts with host DLG1; this interaction leads to the proteasomal degradation of DLG1.

The protein resides in the host cytoplasm. The protein localises to the host nucleus. Functionally, plays a major role in the induction and maintenance of cellular transformation. Acts mainly as an oncoprotein by stimulating the destruction of many host cell key regulatory proteins. E6 associates with host UBE3A/E6-AP ubiquitin-protein ligase, and inactivates tumor suppressors TP53 and TP73 by targeting them to the 26S proteasome for degradation. In turn, DNA damage and chromosomal instabilities increase and lead to cell proliferation and cancer development. The complex E6/E6AP targets several other substrates to degradation via the proteasome including host DLG1 or NFX1, a repressor of human telomerase reverse transcriptase (hTERT). The resulting increased expression of hTERT prevents the shortening of telomere length leading to cell immortalization. Other cellular targets including BAK1, Fas-associated death domain-containing protein (FADD) and procaspase 8, are degraded by E6/E6AP causing inhibition of apoptosis. E6 also inhibits immune response by interacting with host IRF3 and TYK2. These interactions prevent IRF3 transcriptional activities and inhibit TYK2-mediated JAK-STAT activation by interferon alpha resulting in inhibition of the interferon signaling pathway. This Human papillomavirus 58 protein is Protein E6.